Here is a 193-residue protein sequence, read N- to C-terminus: Thymidine kinase (193 aa).

Residues 9–16 (SAMNAGKS) and 87–90 (DEAQ) each bind ATP. Residue E88 is the Proton acceptor of the active site. The Zn(2+) site is built by C145, C147, C182, and H185.

This sequence belongs to the thymidine kinase family. Homotetramer.

The protein resides in the cytoplasm. The catalysed reaction is thymidine + ATP = dTMP + ADP + H(+). The polypeptide is Thymidine kinase (Idiomarina loihiensis (strain ATCC BAA-735 / DSM 15497 / L2-TR)).